The chain runs to 293 residues: Bifunctional protein FolD (293 aa).

NADP(+)-binding positions include 164–166 (GRS), Ser193, and Thr234.

The protein belongs to the tetrahydrofolate dehydrogenase/cyclohydrolase family. In terms of assembly, homodimer.

The enzyme catalyses (6R)-5,10-methylene-5,6,7,8-tetrahydrofolate + NADP(+) = (6R)-5,10-methenyltetrahydrofolate + NADPH. It catalyses the reaction (6R)-5,10-methenyltetrahydrofolate + H2O = (6R)-10-formyltetrahydrofolate + H(+). Its pathway is one-carbon metabolism; tetrahydrofolate interconversion. In terms of biological role, catalyzes the oxidation of 5,10-methylenetetrahydrofolate to 5,10-methenyltetrahydrofolate and then the hydrolysis of 5,10-methenyltetrahydrofolate to 10-formyltetrahydrofolate. This chain is Bifunctional protein FolD, found in Azobacteroides pseudotrichonymphae genomovar. CFP2.